The primary structure comprises 101 residues: Small ribosomal subunit protein uS14 (101 aa).

It belongs to the universal ribosomal protein uS14 family. In terms of assembly, part of the 30S ribosomal subunit. Contacts proteins S3 and S10.

Its function is as follows. Binds 16S rRNA, required for the assembly of 30S particles and may also be responsible for determining the conformation of the 16S rRNA at the A site. The protein is Small ribosomal subunit protein uS14 of Paramagnetospirillum magneticum (strain ATCC 700264 / AMB-1) (Magnetospirillum magneticum).